Here is a 223-residue protein sequence, read N- to C-terminus: MQLERLQKKLGYQFTNLDYLLQALTHRSAGAKNNERLEFLGDSILNFAIGKALFEKFPKANEGELSRMRATLVREQTLAILARKFGLGEYMKLGAGELKSGGYRRESILSDCVEAIIAAIYLDAGMDKAIAQVHLWYQDLLAEMKPGDAQKDPKTRLQEFLQGRKLPLPTYEVLNIKGEAHNQTFKVTCKIEMLEEIFIGIGTSRRKAEQNAAEQVLAKLTTK.

Positions 3 to 125 (LERLQKKLGY…IIAAIYLDAG (123 aa)) constitute an RNase III domain. Glu38 serves as a coordination point for Mg(2+). The active site involves Asp42. Asp111 and Glu114 together coordinate Mg(2+). The active site involves Glu114. In terms of domain architecture, DRBM spans 152–222 (DPKTRLQEFL…AEQVLAKLTT (71 aa)).

This sequence belongs to the ribonuclease III family. In terms of assembly, homodimer. Mg(2+) is required as a cofactor.

The protein resides in the cytoplasm. It catalyses the reaction Endonucleolytic cleavage to 5'-phosphomonoester.. Functionally, digests double-stranded RNA. Involved in the processing of primary rRNA transcript to yield the immediate precursors to the large and small rRNAs (23S and 16S). Processes some mRNAs, and tRNAs when they are encoded in the rRNA operon. Processes pre-crRNA and tracrRNA of type II CRISPR loci if present in the organism. This Actinobacillus pleuropneumoniae serotype 3 (strain JL03) protein is Ribonuclease 3.